The chain runs to 218 residues: Glycerol-3-phosphate acyltransferase 2 (218 aa).

5 helical membrane passes run 6–26 (YLLI…VLVG), 50–70 (VMGP…GTLA), 85–105 (LLLI…FLKF), 115–135 (AGVF…VFLP), and 159–179 (FWFH…LLFV).

It belongs to the PlsY family. Probably interacts with PlsX.

It is found in the cell membrane. It carries out the reaction an acyl phosphate + sn-glycerol 3-phosphate = a 1-acyl-sn-glycero-3-phosphate + phosphate. The protein operates within lipid metabolism; phospholipid metabolism. Its function is as follows. Catalyzes the transfer of an acyl group from acyl-phosphate (acyl-PO(4)) to glycerol-3-phosphate (G3P) to form lysophosphatidic acid (LPA). This enzyme utilizes acyl-phosphate as fatty acyl donor, but not acyl-CoA or acyl-ACP. The protein is Glycerol-3-phosphate acyltransferase 2 of Lactobacillus johnsonii (strain CNCM I-12250 / La1 / NCC 533).